The following is a 227-amino-acid chain: Fibrillarin-like rRNA/tRNA 2'-O-methyltransferase (227 aa).

S-adenosyl-L-methionine is bound by residues 86 to 87, 105 to 106, 130 to 131, and 150 to 153; these read TT, EF, DA, and DVAQ.

The protein belongs to the methyltransferase superfamily. Fibrillarin family. As to quaternary structure, interacts with nop5. Component of box C/D small ribonucleoprotein (sRNP) particles that contain rpl7ae, FlpA and nop5, plus a guide RNA.

In terms of biological role, involved in pre-rRNA and tRNA processing. Utilizes the methyl donor S-adenosyl-L-methionine to catalyze the site-specific 2'-hydroxyl methylation of ribose moieties in rRNA and tRNA. Site specificity is provided by a guide RNA that base pairs with the substrate. Methylation occurs at a characteristic distance from the sequence involved in base pairing with the guide RNA. In Pyrococcus abyssi (strain GE5 / Orsay), this protein is Fibrillarin-like rRNA/tRNA 2'-O-methyltransferase.